The sequence spans 368 residues: 1-deoxy-D-xylulose 5-phosphate reductoisomerase (368 aa).

8 residues coordinate NADPH: T7, G8, S9, I10, G31, K32, N33, and N113. 1-deoxy-D-xylulose 5-phosphate is bound at residue K114. E115 is an NADPH binding site. Mn(2+) is bound at residue D133. 4 residues coordinate 1-deoxy-D-xylulose 5-phosphate: S134, E135, S158, and H181. E135 serves as a coordination point for Mn(2+). G187 serves as a coordination point for NADPH. 1-deoxy-D-xylulose 5-phosphate-binding residues include S194, N199, K200, and E203. Position 203 (E203) interacts with Mn(2+).

Belongs to the DXR family. Mg(2+) serves as cofactor. The cofactor is Mn(2+).

The enzyme catalyses 2-C-methyl-D-erythritol 4-phosphate + NADP(+) = 1-deoxy-D-xylulose 5-phosphate + NADPH + H(+). It participates in isoprenoid biosynthesis; isopentenyl diphosphate biosynthesis via DXP pathway; isopentenyl diphosphate from 1-deoxy-D-xylulose 5-phosphate: step 1/6. Functionally, catalyzes the NADPH-dependent rearrangement and reduction of 1-deoxy-D-xylulose-5-phosphate (DXP) to 2-C-methyl-D-erythritol 4-phosphate (MEP). This Helicobacter pylori (strain HPAG1) protein is 1-deoxy-D-xylulose 5-phosphate reductoisomerase.